The primary structure comprises 218 residues: ATP phosphoribosyltransferase (218 aa).

Belongs to the ATP phosphoribosyltransferase family. Short subfamily. Heteromultimer composed of HisG and HisZ subunits.

The protein localises to the cytoplasm. The catalysed reaction is 1-(5-phospho-beta-D-ribosyl)-ATP + diphosphate = 5-phospho-alpha-D-ribose 1-diphosphate + ATP. It functions in the pathway amino-acid biosynthesis; L-histidine biosynthesis; L-histidine from 5-phospho-alpha-D-ribose 1-diphosphate: step 1/9. Functionally, catalyzes the condensation of ATP and 5-phosphoribose 1-diphosphate to form N'-(5'-phosphoribosyl)-ATP (PR-ATP). Has a crucial role in the pathway because the rate of histidine biosynthesis seems to be controlled primarily by regulation of HisG enzymatic activity. This chain is ATP phosphoribosyltransferase (hisG), found in Deinococcus radiodurans (strain ATCC 13939 / DSM 20539 / JCM 16871 / CCUG 27074 / LMG 4051 / NBRC 15346 / NCIMB 9279 / VKM B-1422 / R1).